Here is a 213-residue protein sequence, read N- to C-terminus: MNESLLTQFGNSLTRVEKALENLKNGKGVLLVDDENRENEGDLIFPAETITVPQMVMLIRECSGIVCLCLTDKKVKKLGLTQMVHNNTCTYETAFTISIEAKEGVTTGVSAADRVTTILTAVKDDCKPEDLCHPGHVFPLRARAGGVLTRPGHTEGTVDLMRLAGYNPAGILCELTNPDGTMARLPQIINFAKKHNLAVLSIEDIIKYKKITT.

Residues 37-38 (RE), D42, 150-154 (RPGHT), and E174 contribute to the D-ribulose 5-phosphate site. E38 provides a ligand contact to Mg(2+). H153 lines the Mg(2+) pocket.

It belongs to the DHBP synthase family. As to quaternary structure, homodimer. It depends on Mg(2+) as a cofactor. Mn(2+) is required as a cofactor.

The enzyme catalyses D-ribulose 5-phosphate = (2S)-2-hydroxy-3-oxobutyl phosphate + formate + H(+). Its pathway is cofactor biosynthesis; riboflavin biosynthesis; 2-hydroxy-3-oxobutyl phosphate from D-ribulose 5-phosphate: step 1/1. Its function is as follows. Catalyzes the conversion of D-ribulose 5-phosphate to formate and 3,4-dihydroxy-2-butanone 4-phosphate. In Clostridium botulinum (strain ATCC 19397 / Type A), this protein is 3,4-dihydroxy-2-butanone 4-phosphate synthase.